Reading from the N-terminus, the 364-residue chain is Capsular polysaccharide phosphotransferase fcs1 (364 aa).

Belongs to the stealth family.

Part of a group II capsule biosynthesis locus. The chain is Capsular polysaccharide phosphotransferase fcs1 (fcs1) from Haemophilus influenzae.